The chain runs to 793 residues: Putative glutamate--cysteine ligase 2-3 (793 aa).

Positions Met1–Asp407 are carboxylate-amine ligase. The interval Thr367–Arg390 is disordered. Residues Met408–Gly793 form a peptidase M20 region.

In the C-terminal section; belongs to the glutamate--cysteine ligase type 2 family. YbdK subfamily.

It catalyses the reaction L-cysteine + L-glutamate + ATP = gamma-L-glutamyl-L-cysteine + ADP + phosphate + H(+). In terms of biological role, ATP-dependent carboxylate-amine ligase which exhibits weak glutamate--cysteine ligase activity. The sequence is that of Putative glutamate--cysteine ligase 2-3 from Rhodococcus jostii (strain RHA1).